Consider the following 739-residue polypeptide: MSEGISLSAEFIDRVKASVKPHWGKLGWVTYKRTYARWLPEKGRSENWDETVKRVVEGNINLDPRLQDSPSLELKQSLTEEAERLYKLIYGLGATPSGRNLWISGTDYQRRTGDSLNNCWFVAIRPQKYGDSKIVPSYLGKQEKAVSMPFSFLFDELMKGGGVGFSVARSNISQIPRVDFAIDLQVVVDESSESYDASVKVGAVGKNEVVQDADSIYYRLPDTREGWVLANALLIDLHFAQTNPDRKQKLILDLSDIRPYGAEIHGFGGTASGPMPLISMLLDINEVLNNKAGGRLTSVDAADICNLIGKAVVAGNVRRSAELALGSNDDQDFISMKQDQEKLMHHRWASNNSVAVDSAFSGYQPIAAGIRENGEPGIVNLDLSKNYGRIVDGYQAGIDGDVEGTNPCGEISLANGEPCNLFEVFPLIAEEQGWDLQEVFALAARYAKRVTFSPYDWEISREIIQKNRRIGISMSGIQDWLLTRLGNRVVTGFKDDFDPETHEAIKVPVYDKRAIKMVDQLYKAVVKADQDYSKTLGCNESIKHTTVKPSGTVAKLAGASEGMHFHYGAYLIQRIRFQNSDPLLPALKACGYRTEADIYTENTTCVEFPVKAVGADNPNFASAGTVSIAEQFATQAFLQTYWSDNAVSCTITFQDSEGDQVESLLRQYRFIIKSTSLLPYFGGSLQQAPKEPIDKETYEKRSQEITGNVEEVFSQLNSDVKDLELVDQTDCEGGACPIK.

Cysteines 119 and 419 form a disulfide. The segment at 147–158 (SMPFSFLFDELM) is effector region-1. The effector region-2 stretch occupies residues 168-313 (ARSNISQIPR…ICNLIGKAVV (146 aa)). Residues cysteine 408 and glutamate 410 contribute to the active site. The interval 565-626 (FHYGAYLIQR…NPNFASAGTV (62 aa)) is adenosylcobalamin-binding-1. The adenosylcobalamin-binding-2 stretch occupies residues 685-724 (LQQAPKEPIDKETYEKRSQEITGNVEEVFSQLNSDVKDLE).

This sequence belongs to the class II ribonucleoside-triphosphate reductase family. In terms of assembly, monomer. Requires adenosylcob(III)alamin as cofactor.

It carries out the reaction a 2'-deoxyribonucleoside 5'-triphosphate + [thioredoxin]-disulfide + H2O = a ribonucleoside 5'-triphosphate + [thioredoxin]-dithiol. With respect to regulation, allosterically regulated by ATP and dNTP. In Lactobacillus delbrueckii subsp. bulgaricus (strain ATCC BAA-365 / Lb-18), this protein is Adenosylcobalamin-dependent ribonucleoside-triphosphate reductase (rtpR).